Reading from the N-terminus, the 228-residue chain is Type II methyltransferase M.HhaII (228 aa).

This sequence belongs to the N(4)/N(6)-methyltransferase family.

The enzyme catalyses a 2'-deoxyadenosine in DNA + S-adenosyl-L-methionine = an N(6)-methyl-2'-deoxyadenosine in DNA + S-adenosyl-L-homocysteine + H(+). A beta subtype methylase, recognizes the double-stranded sequence 5'-GANTC-3', methylates A-2 on both strands, and protects the DNA from cleavage by the HhaII endonuclease. The protein is Type II methyltransferase M.HhaII of Haemophilus parahaemolyticus.